The following is a 420-amino-acid chain: ATP phosphoribosyltransferase regulatory subunit (420 aa).

It belongs to the class-II aminoacyl-tRNA synthetase family. HisZ subfamily. Heteromultimer composed of HisG and HisZ subunits.

It localises to the cytoplasm. The protein operates within amino-acid biosynthesis; L-histidine biosynthesis; L-histidine from 5-phospho-alpha-D-ribose 1-diphosphate: step 1/9. In terms of biological role, required for the first step of histidine biosynthesis. May allow the feedback regulation of ATP phosphoribosyltransferase activity by histidine. The chain is ATP phosphoribosyltransferase regulatory subunit from Bacillus cereus (strain ATCC 14579 / DSM 31 / CCUG 7414 / JCM 2152 / NBRC 15305 / NCIMB 9373 / NCTC 2599 / NRRL B-3711).